Reading from the N-terminus, the 551-residue chain is Seed biotin-containing protein SBP65 (551 aa).

Over residues 1 to 20 the composition is skewed to basic and acidic residues; sequence MASEQLSRRENITTERKIQN. Residues 1–29 form a disordered region; sequence MASEQLSRRENITTERKIQNAEDSVPQRT. Residue lysine 103 is modified to N6-biotinyllysine; atypical. Residues 141–211 adopt a coiled-coil conformation; sequence KGQVVEERER…RNTTQAAQEK (71 aa). Disordered regions lie at residues 197–265 and 518–551; these read TNET…YEAT and DEVEKSMQKNIGSDSHSLDRAKHEGYRAPKNNVS. The segment covering 206 to 219 has biased composition (low complexity); the sequence is QAAQEKGEAAQAKD. Composition is skewed to polar residues over residues 223 to 242 and 250 to 265; these read EKTQQGYEMTGDTVSNSART and AKNTTLGKTQQGYEAT. Positions 533 to 544 are enriched in basic and acidic residues; that stretch reads HSLDRAKHEGYR.

The protein belongs to the seed biotin-containing protein SBP65 family. Expressed in dry mature seeds.

Its function is as follows. May serve as a biotin source for several growth-limiting enzymes that are necessary during seed development and the subsequent germination stages, and thus may play some roles in determining seed germination capacity. This is Seed biotin-containing protein SBP65 (SBP65) from Pisum sativum (Garden pea).